We begin with the raw amino-acid sequence, 235 residues long: Type II secretion system protein N (235 aa).

Over 1–34 (MIPRRSSDITIKTRSDVLPFSGASSRWLQRYAPA) the chain is Cytoplasmic. The chain crosses the membrane as a helical; Signal-anchor for type II membrane protein span at residues 35 to 55 (LLAVALIIAMSISLAWQAAGW). Topologically, residues 56-235 (LRLQRSPVAV…EPTTTPTESD (180 aa)) are periplasmic. Positions 205–235 (DALRQQMEATPIAEPAEEDSSEPTTTPTESD) are disordered. The span at 226-235 (EPTTTPTESD) shows a compositional bias: low complexity.

It localises to the cell inner membrane. Involved in a type II secretion system (T2SS, formerly general secretion pathway, GSP) for the export of proteins. Required for the translocation of a variety of enzymes across the outer membrane. The chain is Type II secretion system protein N (xcpP) from Pseudomonas aeruginosa (strain ATCC 15692 / DSM 22644 / CIP 104116 / JCM 14847 / LMG 12228 / 1C / PRS 101 / PAO1).